Here is a 161-residue protein sequence, read N- to C-terminus: 3-isopropylmalate dehydratase small subunit (161 aa).

This sequence belongs to the LeuD family. LeuD type 2 subfamily. As to quaternary structure, heterodimer of LeuC and LeuD.

The catalysed reaction is (2R,3S)-3-isopropylmalate = (2S)-2-isopropylmalate. Its pathway is amino-acid biosynthesis; L-leucine biosynthesis; L-leucine from 3-methyl-2-oxobutanoate: step 2/4. Catalyzes the isomerization between 2-isopropylmalate and 3-isopropylmalate, via the formation of 2-isopropylmaleate. The sequence is that of 3-isopropylmalate dehydratase small subunit from Sulfolobus acidocaldarius (strain ATCC 33909 / DSM 639 / JCM 8929 / NBRC 15157 / NCIMB 11770).